A 1011-amino-acid chain; its full sequence is MMMSNLKLGVDVIGAHNLFPKDGQGTSNAYVELYFDGQKHRTTIKDRDLNPVWNESFFFNISDPSRLHYLNLEAQAYSHNRSTNGRSFLGKVSLSGTSFVPHSDAVVLHFPMERRGIFSRVRGELGLKVYITDEASLKSSAASNDHPDNLDPALPRAMNVEHRSDKRHVFYNLPNSAQEHQHQHPQGPNQSSSLAAEQDNHNEHHHHYVPKHQVDEMRSEPARPSKLVHAHSIASAQPADFALKETSPHLGGGRVVGGRVIHKDKTATSTYDLVERMYFLYVRVVKARELPIMDITGSVDPFVEVRVGNYKGITRHFEKRQHPEWNQVFAFAKERMQASVLEVVVKDKDLLKDDYVGFVRFDINDVPLRVPPDSPLAPQWYRLEDKKGEKIKGELMLAVWIGTQADEAFSDAWHSDAAMPVDCSPAISAVLRSKVYHAPRLWYVRVNVIEAQDLIPTDKTRFPDVYVKAQLGNQVMKTRPCQARTLGAVWNEDFLFVVAEPFEDHLVLTVEDRVAPGKDEIVGRTYIPLNTVEKRADDHMIHARWYNLERPVIVDVDQLKREKFSMRIHLRVCLEGGYHVLDESTHYSSDLRPSARPLWRQPIGVLELGILNAVGLHPMKTREGRGTSDTFCVGKYGQKWVRTRTMVDNLCPKYNEQYTWEVFDPATVLTVGVFDNGQLGEKGNRDVKIGKIRIRLSTLETGRIYTHSYPLLVLHPTGVKKMGELHMAVRFTCISFANMLYQYSKPLLPKMHYVRPFSVMQQDMLRHQAVNIVAARLGRAEPPLRKEIIEFMSDTDSHLWSMRKSKANFFRMMTVFSGVIAVGKWFSDICSWRNPITTVLVHVLFLMLVCLPELILPTMFLYMFLIGLWNYRFRPRYPPHMNTKISQAEAVHPDELDEEFDTFPTTRNPDMVRLRYDRLRSVAGRIQTVIGDLATQGERFQALLSWRDPRATAIFVILCFIAAIVFFITPIQIVVALAGFFTMRHPRFRHRLPSVPVNFFRRLPARTDSML.

The 110-residue stretch at 1–110 (MMMSNLKLGV…PHSDAVVLHF (110 aa)) folds into the C2 1 domain. Over residues 178–195 (QEHQHQHPQGPNQSSSLA) the composition is skewed to polar residues. A disordered region spans residues 178-201 (QEHQHQHPQGPNQSSSLAAEQDNH). 3 consecutive C2 domains span residues 261–381 (IHKD…PQWY), 421–546 (VDCS…ARWY), and 587–709 (YSSD…THSY). D294, D300, D347, D349, and D354 together coordinate Ca(2+). A run of 3 helical transmembrane segments spans residues 812-832 (MMTV…ICSW), 846-866 (LMLV…MFLI), and 954-974 (IFVI…IQIV).

It belongs to the MCTP family. Requires Ca(2+) as cofactor. As to expression, accumulates specifically in hydathodes. Restricted the basal meristem of roots. Observed in flowers.

The protein resides in the membrane. It localises to the vesicle. It is found in the endosome membrane. In terms of biological role, may function as a signaling molecule by regulating the trafficking of other regulators. This Arabidopsis thaliana (Mouse-ear cress) protein is Multiple C2 domain and transmembrane region protein 7.